Consider the following 771-residue polypeptide: Heat shock transcription factor (771 aa).

The tract at residues 1–70 (MTTNLYAIAG…GIGISKPGLS (70 aa)) is disordered. Low complexity-rich tracts occupy residues 11–23 (PSKP…TPSP) and 31–42 (LKSLTSLPTNPL). Polar residues predominate over residues 43–62 (NPQGTSTSNALTNQSSSTGI). Residues 78–168 (MKVPAFLNKL…PIELWEFANP (91 aa)) mediate DNA binding. Residues 183-266 (RKNNRLSNSG…PPSHTSAGPL (84 aa)) are disordered. 2 stretches are compositionally biased toward low complexity: residues 189-199 (SNSGVGSSSSL) and 212-233 (SASA…ISQG). Positions 238–262 (NHSTSGKYLITDGTTPGSAPPSHTS) are enriched in polar residues. Residues 280–333 (GIAAIRQTQASIATDLRKLQASNEALWRQAYETQEKQRKHEETIDLIVSFLERL) form an involved in trimerization region. Basic and acidic residues-rich tracts occupy residues 350-372 (RGVG…ARFA) and 399-415 (TGEH…DRLV). 3 disordered regions span residues 350–513 (RGVG…SSNA), 590–634 (QALT…GSGT), and 708–771 (SGVG…SGLK). Polar residues predominate over residues 418–448 (GSNSEYSIPSVKRTSSSSHPLSLGQLGSSRF). 2 stretches are compositionally biased toward low complexity: residues 497-511 (LSPL…PSSS) and 599-620 (HNPS…SASA).

Belongs to the HSF family. As to quaternary structure, homotrimer. Homotrimerization increases the affinity of HSF1 to DNA. Interacts with transcriptional coregulator SSA1 on chromatin. Phosphorylated at high temperature.

It localises to the nucleus. Functionally, DNA-binding transcription factor that specifically binds heat shock promoter elements (HSE) and activates transcription. Promotes thermotolerance by transiently regulating a subset of genes. Induces expression of STI, SSA1, SSA2, HSP78 and KAR2 during the heat response. The sequence is that of Heat shock transcription factor from Cryptococcus neoformans var. grubii serotype A (strain H99 / ATCC 208821 / CBS 10515 / FGSC 9487) (Filobasidiella neoformans var. grubii).